The primary structure comprises 176 residues: Disulfide bond formation protein B (176 aa).

Residues 1–14 are Cytoplasmic-facing; sequence MLRFLNQCSQGRGA. A helical membrane pass occupies residues 15-31; the sequence is WLLMAFTALALELTALW. The Periplasmic segment spans residues 32–49; that stretch reads FQHVMLLKPCVLCIYERC. Cys41 and Cys44 are joined by a disulfide. Residues 50–65 form a helical membrane-spanning segment; it reads ALFGVLGAALIGAIAP. Over 66-71 the chain is Cytoplasmic; that stretch reads KTPLRY. The chain crosses the membrane as a helical span at residues 72–89; sequence VAMVIWLYSAFRGVQLTY. The Periplasmic segment spans residues 90 to 144; the sequence is EHTMLQLYPSPFATCDFMVRFPEWLPLDKWVPQVFVASGDCAERQWDFLGMEMPQ. Cys104 and Cys130 are joined by a disulfide. Residues 145 to 163 traverse the membrane as a helical segment; that stretch reads WLLGIFIAYLIVAVLVVIS. At 164–176 the chain is on the cytoplasmic side; that stretch reads QPFKAKKRDLFGR.

The protein belongs to the DsbB family.

Its subcellular location is the cell inner membrane. In terms of biological role, required for disulfide bond formation in some periplasmic proteins such as PhoA or OmpA. Acts by oxidizing the DsbA protein. The sequence is that of Disulfide bond formation protein B from Shigella flexneri.